The chain runs to 176 residues: MSKKDTEHDDDFALFKEAVQGVKKLRQDTIIQQPKKNTKQKEIKRSNREASDSEFYFSDEFVPRLNEEGPTRYARDDVSTYEVKRLRRGVYVPDVFLDMHGMTQQEAKRELGAMIAYCVKNEIHCACVQHGIGKHILKQKAPLWLAQHPDVMAFHQAPLEFGGDGALLVLLSIPEK.

The tract at residues T29–S51 is disordered. A compositionally biased stretch (basic and acidic residues) spans K39–S51. Positions L97–S172 constitute a Smr domain.

It belongs to the SmrB family. In terms of assembly, associates with collided ribosomes, but not with correctly translating polysomes.

Functionally, acts as a ribosome collision sensor. Detects stalled/collided disomes (pairs of ribosomes where the leading ribosome is stalled and a second ribosome has collided with it) and endonucleolytically cleaves mRNA at the 5' boundary of the stalled ribosome. Stalled/collided disomes form a new interface (primarily via the 30S subunits) that binds SmrB. Cleaved mRNA becomes available for tmRNA ligation, leading to ribosomal subunit dissociation and rescue of stalled ribosomes. The sequence is that of Ribosome rescue factor SmrB from Vibrio parahaemolyticus serotype O3:K6 (strain RIMD 2210633).